A 173-amino-acid polypeptide reads, in one-letter code: Translation initiation factor IF-3 (173 aa).

This sequence belongs to the IF-3 family. In terms of assembly, monomer.

Its subcellular location is the cytoplasm. Its function is as follows. IF-3 binds to the 30S ribosomal subunit and shifts the equilibrium between 70S ribosomes and their 50S and 30S subunits in favor of the free subunits, thus enhancing the availability of 30S subunits on which protein synthesis initiation begins. The chain is Translation initiation factor IF-3 from Bartonella bacilliformis (strain ATCC 35685 / KC583 / Herrer 020/F12,63).